Reading from the N-terminus, the 38-residue chain is MKVRTSVKTLCRNCKIVKRHGIIRVICSSDPKHKQRQG.

This sequence belongs to the bacterial ribosomal protein bL36 family.

In Baumannia cicadellinicola subsp. Homalodisca coagulata, this protein is Large ribosomal subunit protein bL36.